The following is a 287-amino-acid chain: Festuclavine synthase II (287 aa).

It belongs to the fgaFS/easG family.

It carries out the reaction festuclavine + NAD(+) = 6,8-dimethyl-6,7-didehydroergoline + NADH + H(+). It functions in the pathway alkaloid biosynthesis; ergot alkaloid biosynthesis. Its function is as follows. Festuclavine synthase; part of the gene cluster that mediates the biosynthesis of isofumigaclavines, fungal ergot alkaloids. The tryptophan dimethylallyltransferase ifgA catalyzes the first step of ergot alkaloid biosynthesis by condensing dimethylallyl diphosphate (DMAP) and tryptophan to form 4-dimethylallyl-L-tryptophan. The second step is catalyzed by the methyltransferase ifgB that methylates 4-dimethylallyl-L-tryptophan in the presence of S-adenosyl-L-methionine, resulting in the formation of N-methyl-dimethylallyl-L-tryptophan. The catalase ifgD and the FAD-dependent oxidoreductase ifgC then transform N-methyl-dimethylallyl-L-tryptophan to chanoclavine-I which is further oxidized by ifgE in the presence of NAD(+), resulting in the formation of chanoclavine-I aldehyde. The chanoclavine-I aldehyde reductases ifgG and/or fgaOx3 reduce chanoclavine-I aldehyde to dihydrochanoclavine-I aldehyde that spontaneously dehydrates to form 6,8-dimethyl-6,7-didehydroergoline. The festuclavine dehydrogenases ifgF1 and/or ifgF2 then catalyze the reduction of 6,8-dimethyl-6,7-didehydroergoline to form festuclavine. Hydrolysis of festuclavine by a yet undetermined cytochrome P450 monooxygenase (called ifgH) then leads to the formation of isofumigaclavine B which is in turn acetylated by ifgI to isofumigaclavine A. Penicillium roqueforti has interestingly at least two sets of genes for the consumption of chanoclavine-I aldehyde on three different loci, the OYEs ifgG/fgaOx3 and the festuclavine synthase homologs ifgF1/ifgF2. The reason for the duplication of these genes is unclear, probably to ensure the conversion of chanoclavine-I aldehyde by differential gene expression under various environmental conditions. In Penicillium roqueforti (strain FM164), this protein is Festuclavine synthase II.